The following is a 298-amino-acid chain: Arginase (298 aa).

Positions 98, 121, 123, and 125 each coordinate Mn(2+). Residues histidine 123 to asparagine 127, serine 134 to asparagine 136, and aspartate 177 contribute to the substrate site. Residues aspartate 225 and aspartate 227 each coordinate Mn(2+). The substrate site is built by threonine 239 and glutamate 270.

Belongs to the arginase family. The cofactor is Mn(2+).

The enzyme catalyses L-arginine + H2O = urea + L-ornithine. It functions in the pathway nitrogen metabolism; urea cycle; L-ornithine and urea from L-arginine: step 1/1. The protein is Arginase (rocF) of Brevibacillus brevis (Bacillus brevis).